The chain runs to 567 residues: Urease subunit alpha (567 aa).

The Urease domain maps to 129-567 (GGIDTHIHWI…LPMAQRYFLF (439 aa)). Ni(2+) is bound by residues His-134, His-136, and Lys-217. Position 217 is an N6-carboxylysine (Lys-217). His-219 is a substrate binding site. Ni(2+) contacts are provided by His-246 and His-272. His-320 (proton donor) is an active-site residue. Position 360 (Asp-360) interacts with Ni(2+).

The protein belongs to the metallo-dependent hydrolases superfamily. Urease alpha subunit family. As to quaternary structure, heterotrimer of UreA (gamma), UreB (beta) and UreC (alpha) subunits. Three heterotrimers associate to form the active enzyme. The cofactor is Ni cation. Carboxylation allows a single lysine to coordinate two nickel ions.

It is found in the cytoplasm. It catalyses the reaction urea + 2 H2O + H(+) = hydrogencarbonate + 2 NH4(+). It participates in nitrogen metabolism; urea degradation; CO(2) and NH(3) from urea (urease route): step 1/1. The protein is Urease subunit alpha of Enterobacter sp. (strain 638).